A 387-amino-acid chain; its full sequence is MEDDAPVIYGLEFQARALTPQTAETDAIRFLVGTQSLKYDNQIHIIDFDDENNIINKNVLLHQAGEIWHISASPADRGVLTTCYNRTSDSKVLTCAAVWRMPKELESGSHESPDDSSSTAQTLELLCHLDNTAHGNMACVVWEPMGDGKKIISLADNHILLWDLQESSSQAVLASSASLEGKGQLKFTSGRWSPHHNCTQVATANDTTLRGWDTRSMSQIYCIENAHGQLVRDLDFNPNKQYYLASCGDDCKVKFWDTRNVTEPVKTLEEHSHWVWNVRYNHSHDQLVLTGSSDSRVILSNMVSISSEPFGHLVDDDDISDQEDHRSEEKSKEPLQDNVIATYEEHEDSVYAVDWSSADPWLFASLSYDGRLVINRVPRALKYHILL.

Residue Met1 is modified to N-acetylmethionine. WD repeat units lie at residues 4–48 (DAPV…IIDF), 55–101 (INKN…VWRM), 124–164 (ELLC…LWDL), 172–214 (VLAS…GWDT), 219–258 (QIYCIENAHGQLVRDLDFNPNKQYYLASCGDDCKVKFWDT), and 263–302 (EPVKTLEEHSHWVWNVRYNHSHDQLVLTGSSDSRVILSNM). The tract at residues 310–335 (FGHLVDDDDISDQEDHRSEEKSKEPL) is disordered. Phosphoserine is present on Ser320. The span at 322-335 (QEDHRSEEKSKEPL) shows a compositional bias: basic and acidic residues. The stretch at 338–379 (NVIATYEEHEDSVYAVDWSSADPWLFASLSYDGRLVINRVPR) is one WD 7 repeat.

Belongs to the WD repeat EIPR1 family. As to quaternary structure, interacts with two multisubunit tethering complexes: EARP composed of VPS50, VPS51, VPS52 and VPS53 subunits and GARP complex composed of VPS51, VPS52, VPS53 and VPS54 subunits. Interacts with SNAP29.

It is found in the golgi apparatus. It localises to the trans-Golgi network. In terms of biological role, acts as a component of endosomal retrieval machinery that is involved in protein transport from early endosomes to either recycling endosomes or the trans-Golgi network. Mediates the recruitment of Golgi-associated retrograde protein (GARP) complex to the trans-Golgi network and controls early endosome-to-Golgi transport of internalized protein. Promotes the recycling of internalized transferrin receptor (TFRC) to the plasma membrane through interaction with endosome-associated recycling protein (EARP) complex. Controls proper insulin distribution and secretion, and retention of cargo in mature dense core vesicles. Required for the stability of the endosome-associated retrograde protein (EARP) complex subunits and for proper localization and association of EARP with membranes. In Homo sapiens (Human), this protein is EARP and GARP complex-interacting protein 1.